The chain runs to 190 residues: Pyridoxamine 5'-phosphate oxidase C1952.08c homolog (190 aa).

S62 and K69 together coordinate FMN.

This sequence belongs to the pyridoxamine 5'-phosphate oxidase family. FMN is required as a cofactor.

Its subcellular location is the cytoplasm. It localises to the nucleus. In Schizosaccharomyces pombe (strain 972 / ATCC 24843) (Fission yeast), this protein is Pyridoxamine 5'-phosphate oxidase C1952.08c homolog.